The following is a 793-amino-acid chain: Transcription factor opdR (793 aa).

3 disordered regions span residues Met-1–Arg-29, Thr-60–Asn-113, and Leu-457–Glu-476. The segment at residues Cys-25 to Cys-53 is a DNA-binding region (zn(2)-C6 fungal-type).

It is found in the nucleus. Transcription factor; part of the gene cluster that mediates the biosynthesis of oxopyrrolidines, polyketide-amino acid hybrid compounds with feature structures of tetramic acid. The chain is Transcription factor opdR from Penicillium oxalicum (strain 114-2 / CGMCC 5302) (Penicillium decumbens).